A 90-amino-acid polypeptide reads, in one-letter code: Electron transfer flavoprotein regulatory factor 1 (90 aa).

The protein belongs to the complex I LYR family. In terms of assembly, homotetramer. Interacts with NDUFAB1. Interacts with ETFA. Interacts with ETFB.

Its subcellular location is the mitochondrion. Its function is as follows. Acts as a regulator of the electron transfer flavoprotein by promoting the removal of flavin from the ETF holoenzyme (composed of ETFA and ETFB). This is Electron transfer flavoprotein regulatory factor 1 from Homo sapiens (Human).